The sequence spans 590 residues: EGF-like and EMI domain-containing protein 1 (590 aa).

The first 23 residues, 1–23, serve as a signal peptide directing secretion; the sequence is MTSPLCFWCFCVWAAANWPPGSA. In terms of domain architecture, EMI spans 44-104; sequence LSRPCAQAFI…RCCPGWIQWD (61 aa). The EGF-like 1 domain occupies 105-145; that stretch reads DEPGCFSSLSSLGTHFSGRECSYQDTRQCLCSQGFHGPHCQ. Disulfide bonds link Cys-109–Cys-125, Cys-135–Cys-144, Cys-168–Cys-179, Cys-175–Cys-188, Cys-190–Cys-203, Cys-209–Cys-219, Cys-215–Cys-228, Cys-230–Cys-243, Cys-249–Cys-260, Cys-256–Cys-269, and Cys-271–Cys-284. Residues 164–204 enclose the EGF-like 2; calcium-binding domain; it reads NVDECAVVNGGCQQRCINTLGTFHCECDTGYRRHADERTCI. The EGF-like 3 domain maps to 205 to 244; it reads KTDPCAGANGCAHLCQTENGMARCACHAGYQLSEDKKACE. Residues 245-285 form the EGF-like 4; calcium-binding domain; it reads DINECAGELAPCAHHCVNSKGSFTCTCHPGFELGADRKHCY. The interval 393–424 is disordered; that stretch reads RLAQNPPQPFPYLDPSLTASYEDEDNDDADSE. Over residues 413-424 the composition is skewed to acidic residues; the sequence is YEDEDNDDADSE. The EGF-like 5 domain maps to 445–481; sequence FGLDCSLSCEDCMNGGRCQEGKSGCLCPAEWTGLICN. 3 disulfides stabilise this stretch: Cys-449–Cys-462, Cys-456–Cys-469, and Cys-471–Cys-480.

In Mus musculus (Mouse), this protein is EGF-like and EMI domain-containing protein 1 (Egfem1).